A 1323-amino-acid chain; its full sequence is Glutamate receptor ionotropic, NMDA 2D (1323 aa).

The signal sequence occupies residues 1–27 (MRGAGGPRGPRGPAKMLLLLALACASP). Residues 28–579 (FPEEVPGPGA…SPSAFLEPYS (552 aa)) are Extracellular-facing. N-linked (GlcNAc...) asparagine glycosylation occurs at N89. Residues C101 and C345 are joined by a disulfide bond. N349, N363, N381, and N464 each carry an N-linked (GlcNAc...) asparagine glycan. Intrachain disulfides connect C452/C480 and C459/C481. Residues S536, T538, and R543 each contribute to the L-glutamate site. N566 is a glycosylation site (N-linked (GlcNAc...) asparagine). A helical transmembrane segment spans residues 580–601 (PAVWVMMFVMCLTVVAVTVFIF). The Cytoplasmic portion of the chain corresponds to 602–626 (EYLSPVGYNRSLATGKRPGGSTFTI). The segment at residues 627–638 (GKSIWLLWALVF) is an intramembrane region (discontinuously helical). The interval 628 to 647 (KSIWLLWALVFNNSVPVENP) is pore-forming. At 639 to 650 (NNSVPVENPRGT) the chain is on the cytoplasmic side. The helical transmembrane segment at 651 to 671 (TSKIMVLVWAFFAVIFLASYT) threads the bilayer. Residues 672–840 (ANLAAFMIQE…EVMSSKLDID (169 aa)) are Extracellular-facing. Residue N712 is glycosylated (N-linked (GlcNAc...) asparagine). Residues S714, T715, and D756 each coordinate L-glutamate. A disulfide bond links C770 and C825. Residues 841-864 (NMAGVFYMLLVAMGLSLLVFAWEH) form a helical membrane-spanning segment. At 865 to 1323 (LVYWRLRHCL…AHFSSLESEV (459 aa)) the chain is on the cytoplasmic side. Disordered regions lie at residues 897–952 (EAAP…PGGA), 977–1112 (AAPR…SLGG), and 1201–1323 (PWAA…ESEV). Residues 899 to 929 (APPPAKPPPPPQPLPSPAYPAARPPPGPAPF) are compositionally biased toward pro residues. Over residues 931 to 940 (PRERAAADRW) the composition is skewed to basic and acidic residues. Over residues 977–986 (AAPRGAAGRP) the composition is skewed to low complexity. Residues 987–1001 (LSPPTTQPPQKPPPS) are compositionally biased toward pro residues. The span at 1030-1039 (AAAAAAVGPP) shows a compositional bias: low complexity. Pro residues predominate over residues 1080-1092 (TAPPPRRAAPPPC). The span at 1208-1228 (PRRRARCGCPRPHPHRPRASH) shows a compositional bias: basic residues. R1303 bears the Omega-N-methylarginine mark. S1313 is subject to Phosphoserine. Residues 1321-1323 (SEV) carry the PDZ-binding motif.

Belongs to the glutamate-gated ion channel (TC 1.A.10.1) family. NR2D/GRIN2D subfamily. In terms of assembly, heterotetramer. Forms heterotetrameric channels composed of two GluN1/zeta subunits (GRIN1), and two identical GluN2/epsilon subunits (GRIN2A, GRIN2B, GRIN2C or GRIN2D) or GluN3 subunits (GRIN3A or GRIN3B) (in vitro). In vivo, the subunit composition may depend on the expression levels of the different subunits. Interacts with PDZ domains of PATJ and DLG4. In terms of tissue distribution, detected in neonate brain synaptosomes (at protein level).

It localises to the cell membrane. The protein resides in the postsynaptic cell membrane. It carries out the reaction Ca(2+)(in) = Ca(2+)(out). The catalysed reaction is Na(+)(in) = Na(+)(out). It catalyses the reaction K(+)(in) = K(+)(out). In terms of biological role, component of N-methyl-D-aspartate (NMDA) receptors (NMDARs) that function as heterotetrameric, ligand-gated cation channels with high calcium permeability and voltage-dependent block by Mg(2+). Participates in synaptic plasticity for learning and memory formation. Channel activation requires binding of the neurotransmitter L-glutamate to the GluN2 subunit, glycine or D-serine binding to the GluN1 subunit, plus membrane depolarization to eliminate channel inhibition by Mg(2+). NMDARs mediate simultaneously the potasium efflux and the influx of calcium and sodium. Each GluN2 subunit confers differential attributes to channel properties, including activation, deactivation and desensitization kinetics, pH sensitivity, Ca2(+) permeability, and binding to allosteric modulators. This chain is Glutamate receptor ionotropic, NMDA 2D, found in Mus musculus (Mouse).